We begin with the raw amino-acid sequence, 132 residues long: Inactive D-aminoacyl-tRNA deacylase (132 aa).

It belongs to the DTD family.

In terms of biological role, a non-functional D-aminoacyl-tRNA deacylase. This chain is Inactive D-aminoacyl-tRNA deacylase, found in Bacillus subtilis (strain 168).